The chain runs to 150 residues: MKARRQRKIIEIIHRQVIATQAELAQVLRKAGFAVTQATVSRDVKELGLLKASDGQTVRYLPPGEQPVAAAEERMVRLFRDYVWEVNANESLVIVKTLPGAAQGVASALDYARWPEILGTVAGDDTIFVAVKSQRDVGGIRERLAGLLEG.

This sequence belongs to the ArgR family.

Its subcellular location is the cytoplasm. The protein operates within amino-acid biosynthesis; L-arginine biosynthesis [regulation]. Regulates arginine biosynthesis genes. This chain is Arginine repressor, found in Desulforudis audaxviator (strain MP104C).